We begin with the raw amino-acid sequence, 164 residues long: B-phycoerythrin alpha chain (164 aa).

Positions 82 and 139 each coordinate (2R,3E)-phycoerythrobilin.

It belongs to the phycobiliprotein family. In terms of assembly, heteromer of 6 alpha, 6 beta and one gamma chain. Post-translationally, contains two covalently linked bilin chromophores.

Its subcellular location is the plastid. The protein resides in the chloroplast thylakoid membrane. Light-harvesting photosynthetic bile pigment-protein from the phycobiliprotein complex. This is B-phycoerythrin alpha chain (cpeA) from Rhodella violacea (Red alga).